The following is a 294-amino-acid chain: tRNA-cytidine(32) 2-sulfurtransferase (294 aa).

Residues 70–75 (SGGKDS) carry the PP-loop motif motif. 3 residues coordinate [4Fe-4S] cluster: C145, C148, and C236.

It belongs to the TtcA family. In terms of assembly, homodimer. Mg(2+) is required as a cofactor. It depends on [4Fe-4S] cluster as a cofactor.

The protein localises to the cytoplasm. It catalyses the reaction cytidine(32) in tRNA + S-sulfanyl-L-cysteinyl-[cysteine desulfurase] + AH2 + ATP = 2-thiocytidine(32) in tRNA + L-cysteinyl-[cysteine desulfurase] + A + AMP + diphosphate + H(+). The protein operates within tRNA modification. In terms of biological role, catalyzes the ATP-dependent 2-thiolation of cytidine in position 32 of tRNA, to form 2-thiocytidine (s(2)C32). The sulfur atoms are provided by the cysteine/cysteine desulfurase (IscS) system. This chain is tRNA-cytidine(32) 2-sulfurtransferase, found in Rhizobium meliloti (strain 1021) (Ensifer meliloti).